A 219-amino-acid chain; its full sequence is Large ribosomal subunit protein uL3 (219 aa).

The tract at residues 113–142 is disordered; the sequence is TTKGHGYQGNIHKDNQSRGPMAHGSRYHRR.

The protein belongs to the universal ribosomal protein uL3 family. Part of the 50S ribosomal subunit. Forms a cluster with proteins L14 and L19.

In terms of biological role, one of the primary rRNA binding proteins, it binds directly near the 3'-end of the 23S rRNA, where it nucleates assembly of the 50S subunit. In Limosilactobacillus reuteri (strain DSM 20016) (Lactobacillus reuteri), this protein is Large ribosomal subunit protein uL3.